Here is a 416-residue protein sequence, read N- to C-terminus: MAVFTPPSGNSNSTDHTHTQDDHDKDDNDIKKFYIRPSLGLKLWGPLVPAPDNLPGLYTLITIQSAVGFFALWRLRRLYKLPPPRRIATGTHSDLSFGELPSEMIVNGKTKIKKDIADFPTLNRFSTTHGDIVLAPPPIIPRQSRFVSVRKLLWGLFGSLLLSQSLLELTRLNFLKYDPWCDEMKSVRDKKFFNNIVKYYHEGIDPTKIKVKDAMNGTPLSTNIPEVKQSVALARAQVEAQNPIIKWFGPLEYKPMSFNEYLNRMEFHLDMFEFFQNKRNIRENSIELINSISHNPQSSSTGLEGLSESKKLHLQNVEKRLHFLASSGDSISAPVKRSSTTLSRGVILPHDTKGPQDIDLDTIRSLYDPWMTLALETSLSIKFIPTTMPSHTKTPTSTDQPLPGPTPKALTNEKTH.

Residues 1 to 28 are disordered; sequence MAVFTPPSGNSNSTDHTHTQDDHDKDDN. At 1–56 the chain is on the mitochondrial intermembrane side; the sequence is MAVFTPPSGNSNSTDHTHTQDDHDKDDNDIKKFYIRPSLGLKLWGPLVPAPDNLPG. Basic and acidic residues predominate over residues 15 to 28; sequence DHTHTQDDHDKDDN. The helical transmembrane segment at 57–73 threads the bilayer; that stretch reads LYTLITIQSAVGFFALW. The Mitochondrial matrix portion of the chain corresponds to 74-151; sequence RLRRLYKLPP…RQSRFVSVRK (78 aa). The helical transmembrane segment at 152–169 threads the bilayer; the sequence is LLWGLFGSLLLSQSLLEL. Residues 170 to 416 are Mitochondrial intermembrane-facing; that stretch reads TRLNFLKYDP…PKALTNEKTH (247 aa). The segment covering 390–400 has biased composition (polar residues); that stretch reads SHTKTPTSTDQ. Residues 390-416 are disordered; it reads SHTKTPTSTDQPLPGPTPKALTNEKTH.

It belongs to the MGR1 family. Component of the mitochondrial inner membrane i-AAA protease complex composed of at least MRG1 and YME1. Interacts directly with YME1.

The protein resides in the mitochondrion inner membrane. Its function is as follows. Component of the mitochondrial inner membrane i-AAA protease complex required for mitochondrial inner membrane protein turnover. Required for growth of cells lacking the mitochondrial genome. The sequence is that of Mitochondrial inner membrane i-AAA protease complex subunit MGR1 (MGR1) from Saccharomyces cerevisiae (strain YJM789) (Baker's yeast).